Consider the following 83-residue polypeptide: UPF0457 protein YnzG (83 aa).

It belongs to the UPF0457 family.

In Bacillus subtilis (strain 168), this protein is UPF0457 protein YnzG (ynzG).